A 583-amino-acid polypeptide reads, in one-letter code: Sensor protein SrrB (583 aa).

The Cytoplasmic portion of the chain corresponds to 1 to 11 (MMSRLNSVVIK). The helical transmembrane segment at 12 to 32 (LWLTIILIVTTVLILLSIALI) threads the bilayer. At 33 to 174 (TFMQYYFTQE…SIEDTNNAIT (142 aa)) the chain is on the extracellular side. The helical transmembrane segment at 175–195 (IITIITAVIFLTITTVFAFFL) threads the bilayer. Residues 196–583 (SSRITKPLRR…TFIIKLPKPE (388 aa)) lie on the Cytoplasmic side of the membrane. The 53-residue stretch at 197 to 249 (SRITKPLRRLRDQATRVSEGDYSYKPSVTTKDEIGQLSQAFNQMSTEIEEHVD) folds into the HAMP domain. Residues 366-583 (NVSHELRTPI…TFIIKLPKPE (218 aa)) enclose the Histidine kinase domain. His-369 is modified (phosphohistidine; by autocatalysis).

It localises to the cell membrane. The enzyme catalyses ATP + protein L-histidine = ADP + protein N-phospho-L-histidine.. Its function is as follows. Member of the two-component regulatory system SrrA/SrrB, which is involved in the global regulation of staphylococcal virulence factors in response to environmental oxygen levels as well as biofilm formation. Also plays an essential role in host-derived nitric oxide resistance by regulating hmp/flavohemoglobin, an enzyme that detoxifies nitric oxide by converting it to nitrate. Functions as a sensor protein kinase which is autophosphorylated at a histidine residue and transfers its phosphate group to SrrA. In turn, SrrA binds to the upstream promoter regions of the target genes to positively and negatively regulate their expression. In Staphylococcus aureus (strain MW2), this protein is Sensor protein SrrB (srrB).